The chain runs to 212 residues: Thymidylate kinase (212 aa).

An ATP-binding site is contributed by 10-17; it reads GIDGCGKT.

This sequence belongs to the thymidylate kinase family.

It carries out the reaction dTMP + ATP = dTDP + ADP. Phosphorylation of dTMP to form dTDP in both de novo and salvage pathways of dTTP synthesis. In Synechococcus sp. (strain RCC307), this protein is Thymidylate kinase.